The following is a 149-amino-acid chain: Large ribosomal subunit protein bL9 (149 aa).

It belongs to the bacterial ribosomal protein bL9 family.

Its function is as follows. Binds to the 23S rRNA. The protein is Large ribosomal subunit protein bL9 of Proteus mirabilis (strain HI4320).